Consider the following 580-residue polypeptide: Long-chain-fatty-acid--AMP ligase FadD28 (580 aa).

A disordered region spans residues 421-440; the sequence is SERTFGGKIVTPSPGTPEGP.

The protein belongs to the ATP-dependent AMP-binding enzyme family.

The enzyme catalyses holo-[mycocerosate synthase] + a long-chain fatty acid + ATP = a long-chain fatty acyl-[mycocerosate synthase] + AMP + diphosphate. It catalyses the reaction a long-chain fatty acid + ATP + H(+) = a long-chain fatty acyl-AMP + diphosphate. The catalysed reaction is holo-[mycocerosate synthase] + a long-chain fatty acyl-AMP = a long-chain fatty acyl-[mycocerosate synthase] + AMP + H(+). It functions in the pathway lipid metabolism; fatty acid biosynthesis. Its function is as follows. Involved in the biosynthesis of phthiocerol dimycocerosate (PDIM), a cell wall-associated lipid found only in pathogenic mycobacteria. Catalyzes the activation of long-chain fatty acids as acyl-adenylates (acyl-AMP), which are then transferred to the multifunctional polyketide synthase Mas for further chain extension. The polypeptide is Long-chain-fatty-acid--AMP ligase FadD28 (fadD28) (Mycobacterium bovis (strain ATCC BAA-935 / AF2122/97)).